The primary structure comprises 86 residues: Immunity protein CdiI-1 (86 aa).

As to quaternary structure, interacts with the C-terminal fragment (CT) of cognate toxin protein CdiA-EC869.

Immunity protein component of a toxin-immunity protein module, which functions as a cellular contact-dependent growth inhibition (CDI) system. CDI modules allow bacteria to communicate with and inhibit the growth of closely related neighboring bacteria in a contact-dependent fashion. Neutralizes the toxic activity of cognate toxin CdiA-EC869 (the C-terminal 289 residue CT fragment). Does not inhibit toxic activity of CdiA from other toxin-immunity modules or strains of E.coli. The polypeptide is Immunity protein CdiI-1 (Escherichia coli O157:H7 (strain EC869)).